We begin with the raw amino-acid sequence, 148 residues long: uncharacterized protein (148 aa).

Residues 122–148 (HNWRKRMGTRRGRHEQSPTSRPRKGPD) are disordered. Basic residues predominate over residues 123–134 (NWRKRMGTRRGR).

This is an uncharacterized protein from Homo sapiens (Human).